The following is an 89-amino-acid chain: Small ribosomal subunit protein bS20 (89 aa).

Residues 1–28 (MTLANIKSAKKRAVQSEKRRQHNASQRS) are disordered.

It belongs to the bacterial ribosomal protein bS20 family.

Its function is as follows. Binds directly to 16S ribosomal RNA. This Haemophilus ducreyi (strain 35000HP / ATCC 700724) protein is Small ribosomal subunit protein bS20.